Reading from the N-terminus, the 208-residue chain is Ribonuclease HII (208 aa).

The RNase H type-2 domain maps to 12–201 (ELVAGVDEVG…VRALLEPVAV (190 aa)). 3 residues coordinate a divalent metal cation: Asp18, Glu19, and Asp110.

Belongs to the RNase HII family. The cofactor is Mn(2+). It depends on Mg(2+) as a cofactor.

It localises to the cytoplasm. It carries out the reaction Endonucleolytic cleavage to 5'-phosphomonoester.. Endonuclease that specifically degrades the RNA of RNA-DNA hybrids. The protein is Ribonuclease HII of Ectopseudomonas mendocina (strain ymp) (Pseudomonas mendocina).